Here is a 381-residue protein sequence, read N- to C-terminus: Homoserine O-succinyltransferase (381 aa).

The region spanning 53–361 (ILICHALSGS…DSVHGHDAFL (309 aa)) is the AB hydrolase-1 domain. The active-site Nucleophile is S157. Residue R227 coordinates substrate. Active-site residues include D324 and H357. Substrate is bound at residue D358.

The protein belongs to the AB hydrolase superfamily. MetX family. As to quaternary structure, homodimer.

Its subcellular location is the cytoplasm. The catalysed reaction is L-homoserine + succinyl-CoA = O-succinyl-L-homoserine + CoA. It participates in amino-acid biosynthesis; L-methionine biosynthesis via de novo pathway; O-succinyl-L-homoserine from L-homoserine: step 1/1. Functionally, transfers a succinyl group from succinyl-CoA to L-homoserine, forming succinyl-L-homoserine. This is Homoserine O-succinyltransferase from Saccharophagus degradans (strain 2-40 / ATCC 43961 / DSM 17024).